A 302-amino-acid polypeptide reads, in one-letter code: GTPase Era (302 aa).

Residues 9–177 (YCGFIAIVGR…EKIVRQSLRE (169 aa)) form the Era-type G domain. Residues 17–24 (GRPNVGKS) are G1. Residue 17-24 (GRPNVGKS) coordinates GTP. Residues 43–47 (QTTRH) are G2. The tract at residues 64–67 (DTPG) is G3. Residues 64-68 (DTPGL) and 126-129 (NKVD) each bind GTP. A G4 region spans residues 126 to 129 (NKVD). The segment at 156-158 (ISA) is G5. Residues 208-285 (TGEELPYSVT…HLELWVKVKS (78 aa)) enclose the KH type-2 domain.

It belongs to the TRAFAC class TrmE-Era-EngA-EngB-Septin-like GTPase superfamily. Era GTPase family. In terms of assembly, monomer.

It is found in the cytoplasm. Its subcellular location is the cell inner membrane. In terms of biological role, an essential GTPase that binds both GDP and GTP, with rapid nucleotide exchange. Plays a role in 16S rRNA processing and 30S ribosomal subunit biogenesis and possibly also in cell cycle regulation and energy metabolism. This is GTPase Era from Haemophilus influenzae (strain PittGG).